The sequence spans 466 residues: ATP synthase subunit beta (466 aa).

152–159 (GGAGVGKT) lines the ATP pocket.

The protein belongs to the ATPase alpha/beta chains family. F-type ATPases have 2 components, CF(1) - the catalytic core - and CF(0) - the membrane proton channel. CF(1) has five subunits: alpha(3), beta(3), gamma(1), delta(1), epsilon(1). CF(0) has three main subunits: a(1), b(2) and c(9-12). The alpha and beta chains form an alternating ring which encloses part of the gamma chain. CF(1) is attached to CF(0) by a central stalk formed by the gamma and epsilon chains, while a peripheral stalk is formed by the delta and b chains.

It is found in the cell inner membrane. The catalysed reaction is ATP + H2O + 4 H(+)(in) = ADP + phosphate + 5 H(+)(out). Functionally, produces ATP from ADP in the presence of a proton gradient across the membrane. The catalytic sites are hosted primarily by the beta subunits. The protein is ATP synthase subunit beta of Helicobacter pylori (strain HPAG1).